Consider the following 318-residue polypeptide: Malate dehydrogenase (318 aa).

NAD(+)-binding positions include 10–15 (GGGQIG) and Asp-34. The substrate site is built by Arg-83 and Arg-89. NAD(+) contacts are provided by residues Asn-96 and 119-121 (ISN). Substrate is bound by residues Asn-121 and Arg-152. The active-site Proton acceptor is the His-176.

This sequence belongs to the LDH/MDH superfamily. MDH type 3 family.

The enzyme catalyses (S)-malate + NAD(+) = oxaloacetate + NADH + H(+). Its function is as follows. Catalyzes the reversible oxidation of malate to oxaloacetate. In Geotalea daltonii (strain DSM 22248 / JCM 15807 / FRC-32) (Geobacter daltonii), this protein is Malate dehydrogenase.